Reading from the N-terminus, the 564-residue chain is MFS-type transporter dmxR4 (564 aa).

A disordered region spans residues 1–61; sequence MSSERPDGSA…PAKEAPAKPA (61 aa). A compositionally biased stretch (polar residues) spans 25–44; the sequence is TDSSRTSNDASQTSQDTAVQ. A compositionally biased stretch (basic and acidic residues) spans 47–57; sequence PPKEAPAKEAP. 5 helical membrane-spanning segments follow: residues 71–91, 106–126, 138–158, 169–189, and 199–219; these read IALL…DRSI, AGDI…FQLL, TVFV…GAAP, LAGI…VFLI, and GLFG…GGGF. A glycan (N-linked (GlcNAc...) asparagine) is linked at Asn222. 7 consecutive transmembrane segments (helical) span residues 227–247, 265–285, 299–319, 348–368, 376–396, 405–425, and 438–458; these read WCFY…ALWM, GLDL…LLAL, IIAL…LQAF, GVHL…GGFF, SPLA…IYTF, WIGS…APNL, and SALA…VSVG. An N-linked (GlcNAc...) asparagine glycan is attached at Asn469. 2 consecutive transmembrane segments (helical) span residues 470–490 and 512–532; these read LSWI…VSFL and VFMI…SMEW. The interval 534–564 is disordered; the sequence is SVKSRGSWDEKPAAKPTDKPTEEKKVPPEAV. Positions 539-564 are enriched in basic and acidic residues; that stretch reads GSWDEKPAAKPTDKPTEEKKVPPEAV.

Belongs to the major facilitator superfamily. TCR/Tet family.

It is found in the membrane. In terms of biological role, MFS-type transporter; part of the gene cluster that mediates the biosynthesis of the dimeric xanthones cryptosporioptides. The protein is MFS-type transporter dmxR4 of Cryptosporiopsis sp. (strain 8999).